The primary structure comprises 408 residues: Lupus La protein (408 aa).

The 93-residue stretch at 7–99 folds into the HTH La-type RNA-binding domain; the sequence is NEKMAALEAK…RRSPSKPLPE (93 aa). Phosphoserine is present on residues S92 and S94. The RRM domain maps to 111 to 187; it reads RSVYIKGFPT…TDLLILFKDD (77 aa). At K116 the chain carries N6-acetyllysine. At T120 the chain carries Phosphothreonine. Position 128 is an N6-acetyllysine (K128). S225 bears the Phosphoserine mark. A xRRM domain is found at 227 to 348; sequence EEKIGCLLKF…KGKGNKAAQP (122 aa). N6-acetyllysine occurs at positions 328, 341, and 360. Residues 329–342 are compositionally biased toward basic residues; it reads WKSKGRRFKGKGKG. A disordered region spans residues 329–408; it reads WKSKGRRFKG…QKTENGAGDQ (80 aa). A Phosphothreonine modification is found at T362. S366 is modified (phosphoserine; by CK2). The segment covering 384–395 has biased composition (basic and acidic residues); it reads RAREETDKEEPA.

In terms of assembly, interacts with DDX15. May interact with RUFY1. In terms of processing, phosphorylated. The phosphorylation sites are at the C-terminal part of the protein. Post-translationally, the N-terminus is blocked.

Its subcellular location is the nucleus. In terms of biological role, binds to the 3' poly(U) terminus of nascent RNA polymerase III transcripts, protecting them from exonuclease digestion and facilitating their folding and maturation. In case of Coxsackievirus B3 infection, binds to the viral internal ribosome entry site (IRES) and stimulates the IRES-mediated translation. This is Lupus La protein (SSB) from Homo sapiens (Human).